The primary structure comprises 463 residues: Phosphomannomutase/phosphoglucomutase (463 aa).

The active-site Phosphoserine intermediate is Ser-108. Residues Ser-108, Asp-242, Asp-244, and Asp-246 each contribute to the Mg(2+) site. Substrate-binding residues include Glu-325, Ser-327, and His-329.

It belongs to the phosphohexose mutase family. Monomer. The cofactor is Mg(2+).

The catalysed reaction is alpha-D-mannose 1-phosphate = D-mannose 6-phosphate. It catalyses the reaction alpha-D-glucose 1-phosphate = alpha-D-glucose 6-phosphate. It participates in nucleotide-sugar biosynthesis; GDP-alpha-D-mannose biosynthesis; alpha-D-mannose 1-phosphate from D-fructose 6-phosphate: step 2/2. The protein operates within bacterial outer membrane biogenesis; lipopolysaccharide biosynthesis. In terms of biological role, the phosphomannomutase activity produces a precursor for alginate polymerization. The alginate layer causes a mucoid phenotype and provides a protective barrier against host immune defenses and antibiotics. Also involved in core-LPS biosynthesis due to its phosphoglucomutase activity. Essential for biofilm production. The polypeptide is Phosphomannomutase/phosphoglucomutase (algC) (Pseudomonas putida (strain ATCC 47054 / DSM 6125 / CFBP 8728 / NCIMB 11950 / KT2440)).